The sequence spans 257 residues: Type III pantothenate kinase (257 aa).

6 to 13 (DVGNTNTV) is a binding site for ATP. Substrate-binding positions include tyrosine 102 and 109 to 112 (GADR). The active-site Proton acceptor is aspartate 111. Aspartate 131 lines the K(+) pocket. Threonine 134 serves as a coordination point for ATP. Position 186 (threonine 186) interacts with substrate.

This sequence belongs to the type III pantothenate kinase family. As to quaternary structure, homodimer. NH4(+) is required as a cofactor. K(+) serves as cofactor.

The protein localises to the cytoplasm. It carries out the reaction (R)-pantothenate + ATP = (R)-4'-phosphopantothenate + ADP + H(+). The protein operates within cofactor biosynthesis; coenzyme A biosynthesis; CoA from (R)-pantothenate: step 1/5. Functionally, catalyzes the phosphorylation of pantothenate (Pan), the first step in CoA biosynthesis. This Leptospira borgpetersenii serovar Hardjo-bovis (strain JB197) protein is Type III pantothenate kinase.